The following is a 515-amino-acid chain: Cytoplasmic tRNA 2-thiolation protein 2 (515 aa).

Disordered stretches follow at residues 1-24 and 188-217; these read MCQV…RPSR and LGAG…ARPP. An N-acetylcysteine modification is found at Cys-2. Ser-415, Ser-419, Ser-435, and Ser-508 each carry phosphoserine.

The protein belongs to the CTU2/NCS2 family. Component of a complex at least composed of URM1, CTU2/NCS2 and CTU1/ATPBD3.

The protein resides in the cytoplasm. It participates in tRNA modification; 5-methoxycarbonylmethyl-2-thiouridine-tRNA biosynthesis. Plays a central role in 2-thiolation of mcm(5)S(2)U at tRNA wobble positions of tRNA(Lys), tRNA(Glu) and tRNA(Gln). May act by forming a heterodimer with CTU1/ATPBD3 that ligates sulfur from thiocarboxylated URM1 onto the uridine of tRNAs at wobble position. The sequence is that of Cytoplasmic tRNA 2-thiolation protein 2 from Homo sapiens (Human).